The sequence spans 234 residues: Peroxiredoxin-2E, chloroplastic (234 aa).

The transit peptide at 1 to 70 (MATSLSVSRF…TRSFATTPVT (70 aa)) directs the protein to the chloroplast. The Thioredoxin domain occupies 73–234 (ISVGDKLPDS…SSAEDMLKAL (162 aa)). Ser-82 bears the Phosphoserine mark. Cys-121 acts as the Cysteine sulfenic acid (-SOH) intermediate in catalysis.

The protein belongs to the peroxiredoxin family. Prx5 subfamily. As to quaternary structure, monomer. In terms of tissue distribution, expressed in all tissues but predominantly in buds, siliques and seeds.

It localises to the plastid. It is found in the chloroplast stroma. It catalyses the reaction [glutaredoxin]-dithiol + a hydroperoxide = [glutaredoxin]-disulfide + an alcohol + H2O. Functionally, thiol-specific peroxidase that catalyzes the reduction of hydrogen peroxide and organic hydroperoxides to water and alcohols, respectively. Plays a role in cell protection against oxidative stress by detoxifying peroxides. May be involved in chloroplast redox homeostasis. The polypeptide is Peroxiredoxin-2E, chloroplastic (PRXIIE) (Arabidopsis thaliana (Mouse-ear cress)).